Here is a 294-residue protein sequence, read N- to C-terminus: 33 kDa chaperonin (294 aa).

2 disulfides stabilise this stretch: cysteine 239-cysteine 241 and cysteine 272-cysteine 275.

This sequence belongs to the HSP33 family. In terms of processing, under oxidizing conditions two disulfide bonds are formed involving the reactive cysteines. Under reducing conditions zinc is bound to the reactive cysteines and the protein is inactive.

It is found in the cytoplasm. Redox regulated molecular chaperone. Protects both thermally unfolding and oxidatively damaged proteins from irreversible aggregation. Plays an important role in the bacterial defense system toward oxidative stress. The sequence is that of 33 kDa chaperonin from Lacticaseibacillus paracasei (strain ATCC 334 / BCRC 17002 / CCUG 31169 / CIP 107868 / KCTC 3260 / NRRL B-441) (Lactobacillus paracasei).